A 645-amino-acid chain; its full sequence is UPF0313 protein CLM_0251 (645 aa).

Residues 295–566 (AIKEVKFSIT…RMQRALLQFS (272 aa)) form the Radical SAM core domain. Residues cysteine 309, cysteine 313, and cysteine 316 each coordinate [4Fe-4S] cluster. Residues 598-645 (NKPYKKSHKKNNAKNNNNHYNKNNNYNKNKDISKKNKKNSLSKHKKRK) are disordered. A compositionally biased stretch (basic residues) spans 600–609 (PYKKSHKKNN). The segment covering 610–624 (AKNNNNHYNKNNNYN) has biased composition (low complexity). Over residues 632 to 645 (KNKKNSLSKHKKRK) the composition is skewed to basic residues.

The protein belongs to the UPF0313 family. It depends on [4Fe-4S] cluster as a cofactor.

This is UPF0313 protein CLM_0251 from Clostridium botulinum (strain Kyoto / Type A2).